The chain runs to 94 residues: Conotoxin Gla-MrII (94 aa).

The signal sequence occupies residues 1-25 (MFGHTSVSFLLLSIVALGMVATVIC). Glu30, Glu34, Glu37, Glu40, and Glu41 each carry 4-carboxyglutamate. The propeptide occupies 78 to 94 (STHMQKRFLRMPRDLAD).

Belongs to the conotoxin I2 superfamily. In terms of processing, contains 4 disulfide bonds. Expressed by the venom duct.

It is found in the secreted. The polypeptide is Conotoxin Gla-MrII (Conus marmoreus (Marble cone)).